The chain runs to 434 residues: Tryptophan dimethylallyltransferase nptA (434 aa).

L-tryptophan contacts are provided by residues 91 to 92 (SL) and glutamate 100. Substrate-binding residues include arginine 115, lysine 202, and tyrosine 204. Tyrosine 206 provides a ligand contact to L-tryptophan. The substrate site is built by arginine 271, lysine 273, tyrosine 275, tyrosine 358, tyrosine 423, and tyrosine 427.

This sequence belongs to the tryptophan dimethylallyltransferase family. As to quaternary structure, homodimer.

It carries out the reaction L-tryptophan + dimethylallyl diphosphate = 4-(3-methylbut-2-enyl)-L-tryptophan + diphosphate. It functions in the pathway secondary metabolite biosynthesis. Functionally, nonribosomal peptide synthase involved in the synthesis of nidulanin A and derived compounds. Nidulanin A is a tetracyclopeptide with the sequence L-Phe-L-Kyn-L-Val-D-Val and an isoprene unit N-linked to the amino group of L-kynurenine. The NRPS nlsA is responsible of the synthesis of the cyclopeptide and the prenyltransferase nptA adds the isoprene unit on the L-kynurenine residue of nidulanin A. Further modifications lead to additional oxygenated related compounds. This chain is Tryptophan dimethylallyltransferase nptA, found in Emericella nidulans (strain FGSC A4 / ATCC 38163 / CBS 112.46 / NRRL 194 / M139) (Aspergillus nidulans).